Here is a 212-residue protein sequence, read N- to C-terminus: Uridine kinase (212 aa).

Residue 13 to 20 (GASASGKS) participates in ATP binding.

Belongs to the uridine kinase family.

It is found in the cytoplasm. It carries out the reaction uridine + ATP = UMP + ADP + H(+). The catalysed reaction is cytidine + ATP = CMP + ADP + H(+). Its pathway is pyrimidine metabolism; CTP biosynthesis via salvage pathway; CTP from cytidine: step 1/3. It functions in the pathway pyrimidine metabolism; UMP biosynthesis via salvage pathway; UMP from uridine: step 1/1. The chain is Uridine kinase from Shewanella putrefaciens (strain CN-32 / ATCC BAA-453).